Reading from the N-terminus, the 682-residue chain is DNA ligase (682 aa).

NAD(+) is bound by residues 42 to 46 (DAAYD), 88 to 89 (SL), and Glu121. The active-site N6-AMP-lysine intermediate is the Lys123. Residues Arg144, Glu180, Lys291, and Lys315 each coordinate NAD(+). Positions 409, 412, 427, and 433 each coordinate Zn(2+). Positions 601-682 (AAGGALAGKT…FRSLAGLPPG (82 aa)) constitute a BRCT domain.

This sequence belongs to the NAD-dependent DNA ligase family. LigA subfamily. It depends on Mg(2+) as a cofactor. Requires Mn(2+) as cofactor.

The enzyme catalyses NAD(+) + (deoxyribonucleotide)n-3'-hydroxyl + 5'-phospho-(deoxyribonucleotide)m = (deoxyribonucleotide)n+m + AMP + beta-nicotinamide D-nucleotide.. In terms of biological role, DNA ligase that catalyzes the formation of phosphodiester linkages between 5'-phosphoryl and 3'-hydroxyl groups in double-stranded DNA using NAD as a coenzyme and as the energy source for the reaction. It is essential for DNA replication and repair of damaged DNA. In Acidiphilium cryptum (strain JF-5), this protein is DNA ligase.